We begin with the raw amino-acid sequence, 452 residues long: NADH-quinone oxidoreductase subunit H (452 aa).

Helical transmembrane passes span 28 to 48 (IILI…LMMI), 96 to 116 (VIYI…FSVI), 136 to 156 (LPVA…GIVL), 177 to 197 (VISY…YAGT), 210 to 230 (IWFA…MIGE), 264 to 286 (AEYV…GYLA), 301 to 321 (WWPA…FVWV), 335 to 355 (KLGW…VAVI), and 366 to 386 (YVTA…LWAW).

This sequence belongs to the complex I subunit 1 family. NDH-1 is composed of 14 different subunits. Subunits NuoA, H, J, K, L, M, N constitute the membrane sector of the complex.

The protein localises to the cell membrane. The catalysed reaction is a quinone + NADH + 5 H(+)(in) = a quinol + NAD(+) + 4 H(+)(out). NDH-1 shuttles electrons from NADH, via FMN and iron-sulfur (Fe-S) centers, to quinones in the respiratory chain. The immediate electron acceptor for the enzyme in this species is believed to be ubiquinone. Couples the redox reaction to proton translocation (for every two electrons transferred, four hydrogen ions are translocated across the cytoplasmic membrane), and thus conserves the redox energy in a proton gradient. This subunit may bind ubiquinone. This Thermobifida fusca (strain YX) protein is NADH-quinone oxidoreductase subunit H.